Reading from the N-terminus, the 164-residue chain is UBA-like domain-containing protein 2 (164 aa).

Serine 2 is modified (N-acetylserine). The interval 144 to 164 is disordered; that stretch reads PPGASQGGAPQKAMAAMDGQR.

This sequence belongs to the UBALD family.

The polypeptide is UBA-like domain-containing protein 2 (Ubald2) (Mus musculus (Mouse)).